The chain runs to 390 residues: Probable tRNA pseudouridine synthase D (390 aa).

The active-site Nucleophile is the aspartate 93. Residues 166 to 353 (HVLNYFGIQR…YGTRRKLITP (188 aa)) form the TRUD domain.

Belongs to the pseudouridine synthase TruD family.

The catalysed reaction is uridine(13) in tRNA = pseudouridine(13) in tRNA. Its function is as follows. Could be responsible for synthesis of pseudouridine from uracil-13 in transfer RNAs. The sequence is that of Probable tRNA pseudouridine synthase D from Methanococcus vannielii (strain ATCC 35089 / DSM 1224 / JCM 13029 / OCM 148 / SB).